We begin with the raw amino-acid sequence, 193 residues long: Putative nitroreductase HBN1 (193 aa).

An N-acetylserine modification is found at Ser2.

Belongs to the nitroreductase family. Requires FMN as cofactor.

It localises to the cytoplasm. The protein resides in the nucleus. This is Putative nitroreductase HBN1 (HBN1) from Saccharomyces cerevisiae (strain ATCC 204508 / S288c) (Baker's yeast).